The chain runs to 498 residues: MSTYRIQGATGEWEVVIGLEVHAQVTSNAKLFSGASTEFGAEPNAQVSLVDAAMPGMLPVPNRECIRQAVRTGMAIEAQINTWSRFDRKNYFYADLPQGYQISQLYHPLVGEGQLLIEADEKAGISEDKVIGIERIHVEQDAGKLMHDQHPTMSYVDLNRCGVALMEIVSRPDMRSPAEAGAYVRKLRAILRYVGSCDGNMEEGSMRADVNVSVRRPGEEFGTRTETKNVNSVRFVMQVIEYEANRQVDLIESGGAVEQETRLFDPGTGTTRTMRSKEDAHDYRYFPDPDLLPLELEDSFLDECRASLPELPDAKRQRYENELGLTPYNARELTAEVETFARFETLLAATAKAIGEDEKKVATQVANWALSVAPGVIKSLGDEAHVENATAERQAAILKMQDAGEISGGQAKEIFEIVLKEGGDPATIADEKGLKQVSDTGAIEAAIDEILANNEDKVEQYKCGKDKLFGFFVGQTMKAMQGKANPAVVNQILKDKLG.

It belongs to the GatB/GatE family. GatB subfamily. Heterotrimer of A, B and C subunits.

It carries out the reaction L-glutamyl-tRNA(Gln) + L-glutamine + ATP + H2O = L-glutaminyl-tRNA(Gln) + L-glutamate + ADP + phosphate + H(+). The catalysed reaction is L-aspartyl-tRNA(Asn) + L-glutamine + ATP + H2O = L-asparaginyl-tRNA(Asn) + L-glutamate + ADP + phosphate + 2 H(+). Allows the formation of correctly charged Asn-tRNA(Asn) or Gln-tRNA(Gln) through the transamidation of misacylated Asp-tRNA(Asn) or Glu-tRNA(Gln) in organisms which lack either or both of asparaginyl-tRNA or glutaminyl-tRNA synthetases. The reaction takes place in the presence of glutamine and ATP through an activated phospho-Asp-tRNA(Asn) or phospho-Glu-tRNA(Gln). The polypeptide is Aspartyl/glutamyl-tRNA(Asn/Gln) amidotransferase subunit B (Erythrobacter litoralis (strain HTCC2594)).